Reading from the N-terminus, the 655-residue chain is A-type voltage-gated potassium channel KCND3 (655 aa).

Residues 1–182 (MAAGVAAWLP…FENPHTSTLA (182 aa)) are Cytoplasmic-facing. Residues 6–21 (AAWLPFARAAAIGWMP) form an interaction with KCNIP1 and KCNIP2 region. Positions 70 to 78 (EKEFFFNED) are interaction with KCNIP1. Residues His-104, Cys-110, Cys-131, and Cys-132 each contribute to the Zn(2+) site. Ser-153 carries the phosphoserine modification. Residues 183–204 (LVFYYVTGFFIAVSVITNVVET) form a helical membrane-spanning segment. Topologically, residues 205–223 (VPCGTVPGSKELPCGERYS) are extracellular. A helical membrane pass occupies residues 224–246 (VAFFCLDTACVMIFTVEYLLRLF). Over 247–253 (AAPSRYR) the chain is Cytoplasmic. A helical membrane pass occupies residues 254–277 (FIRSVMSIIDVVAIMPYYIGLVMT). The Extracellular segment spans residues 278–283 (NNEDVS). Residues 284 to 306 (GAFVTLRVFRVFRIFKFSRHSQG) traverse the membrane as a helical; Voltage-sensor segment. The Cytoplasmic segment spans residues 307-318 (LRILGYTLKSCA). Residues 319–343 (SELGFLLFSLTMAIIIFATVMFYAE) form a helical membrane-spanning segment. Residues 344–352 (KGSSASKFT) lie on the Extracellular side of the membrane. An intramembrane region (helical) is located at residues 353 to 366 (SIPASFWYTIVTMT). K(+)-binding residues include Thr-367, Leu-368, Gly-369, and Tyr-370. Positions 367–372 (TLGYGD) match the Selectivity filter motif. The stretch at 367–374 (TLGYGDMV) is an intramembrane region. Residues 378–400 (IAGKIFGSICSLSGVLVIALPVP) traverse the membrane as a helical segment. Over 401–655 (VIVSNFSRIY…TSNVVKVSAL (255 aa)) the chain is Cytoplasmic. Thr-459 carries the phosphothreonine modification. The tract at residues 470–487 (SLIESQHHHLLHCLEKTT) is interaction with KCNIP1 and KCNIP2. The interval 472–487 (IESQHHHLLHCLEKTT) is mediates dendritic targeting. The tract at residues 523–565 (SSMQNYPSTRSPSLSSHSGLTTTCCSRRSKKTTHLPNSNLPAT) is disordered. Residues 529-548 (PSTRSPSLSSHSGLTTTCCS) show a composition bias toward low complexity. Residues Ser-569 and Ser-585 each carry the phosphoserine modification. Residues 615–655 (ISIPTPPALTPEGESRPPPASPGPNTNIPSITSNVVKVSAL) form a disordered region. Residues 637 to 655 (GPNTNIPSITSNVVKVSAL) are compositionally biased toward polar residues.

This sequence belongs to the potassium channel family. D (Shal) (TC 1.A.1.2) subfamily. Kv4.3/KCND3 sub-subfamily. In terms of assembly, homotetramer. Heterotetramer with KCND2. Associates with the regulatory subunit KCNIP3. Associates with the regulatory subunit KCNIP4. Interacts with KCNE1, KCNE2, SCN1B and KCNAB1 and DLG1. Component of heteromultimeric potassium channels. Identified in potassium channel complexes containing KCND1, KCND2, KCND3, KCNIP1, KCNIP2, KCNIP3, KCNIP4, DPP6 and DPP10. Interacts with KCNIP1; each KCNIP1 monomer interacts with two adjacent KCND3 subunits, through both the N-terminal inactivation ball of a KCND3 subunit and a C-terminal helix from the adjacent KCND3 subunit, clamping them together; this interaction stabilizes the tetrameric form and modulates the channel gating kinetics namely channel activation and inactivation kinetics and rate of recovery from inactivation. Interacts with DPP6; this interaction modulates the channel gating kinetics namely channel activation and inactivation kinetics and rate of recovery from inactivation. Interacts with KCNIP2; each KCNIP2 monomer interacts with two adjacent KCND3 subunits, through both the N-terminal inactivation ball of a KCND3 subunit and a C-terminal helix from the adjacent KCND3 subunit, clamping them together; this interaction modulates the channel gating kinetics. In terms of processing, regulated through phosphorylation at Ser-569 by CaMK2D.

Its subcellular location is the cell membrane. The protein resides in the sarcolemma. It is found in the cell projection. It localises to the dendrite. It catalyses the reaction K(+)(in) = K(+)(out). In terms of biological role, pore-forming (alpha) subunit of voltage-gated A-type potassium channels that mediates transmembrane potassium transport in excitable membranes, in brain and heart. In cardiomyocytes, may generate the transient outward potassium current I(To). In neurons, may conduct the transient subthreshold somatodendritic A-type potassium current (ISA). Kinetics properties are characterized by fast activation at subthreshold membrane potentials, rapid inactivation, and quick recovery from inactivation. Channel properties are modulated by interactions with regulatory subunits. Interaction with the regulatory subunits KCNIP1 or KCNIP2 modulates the channel gating kinetics namely channel activation and inactivation kinetics and rate of recovery from inactivation. Likewise, interaction with DPP6 modulates the channel gating kinetics namely channel activation and inactivation kinetics. The protein is A-type voltage-gated potassium channel KCND3 of Mus musculus (Mouse).